The following is a 737-amino-acid chain: Delta and Notch-like epidermal growth factor-related receptor (737 aa).

An N-terminal signal peptide occupies residues 1–25 (MPPRRAQAPGAPLLPVLALLPLLLG). Residues 26-640 (AGPQSGCLAS…LTNMPRHSLY (615 aa)) lie on the Extracellular side of the membrane. EGF-like domains are found at residues 44–92 (APGP…TYCQ) and 94–133 (VADP…LNCE). The interaction with NOTCH1 stretch occupies residues 44-133 (APGPCASQPC…NDGYEGLNCE (90 aa)). Cystine bridges form between Cys48–Cys59, Cys53–Cys80, Cys82–Cys91, Cys98–Cys108, Cys103–Cys121, and Cys123–Cys132. N-linked (GlcNAc...) asparagine glycosylation occurs at Asn204. EGF-like domains follow at residues 309 to 348 (PGDS…TFCE), 349 to 390 (EFDA…ELCQ), 392 to 428 (KIDY…SACE), 430 to 466 (KVDP…PTCA), and 468 to 503 (LVDF…LYCE). 23 disulfide bridges follow: Cys319-Cys336, Cys338-Cys347, Cys353-Cys364, Cys358-Cys378, Cys380-Cys389, Cys396-Cys407, Cys401-Cys416, Cys418-Cys427, Cys434-Cys445, Cys439-Cys454, Cys456-Cys465, Cys472-Cys482, Cys477-Cys491, Cys493-Cys502, Cys509-Cys520, Cys514-Cys529, Cys531-Cys540, Cys547-Cys558, Cys552-Cys567, Cys569-Cys578, Cys585-Cys596, Cys590-Cys605, and Cys607-Cys616. The EGF-like 8; calcium-binding domain maps to 505 to 541 (EYNECLSAPCLNAATCRDLINGYECVCLAEYKGTHCE). The region spanning 543-579 (YKDPCANISCLNGGTCDSEGLNGTCICAPGFTGEECD) is the EGF-like 9 domain. A glycan (N-linked (GlcNAc...) asparagine) is linked at Asn564. The 37-residue stretch at 581–617 (DINECDSNPCHHAGTCLDQPNGYTCHCPHGWVGANCE) folds into the EGF-like 10; calcium-binding domain. The helical transmembrane segment at 641-661 (IIIGALCVAFILMLIILIVGI) threads the bilayer. At 662 to 737 (CRISRIEYQG…LVTLIKTKDL (76 aa)) the chain is on the cytoplasmic side. The tract at residues 677–680 (YEEF) is interaction with AP1G1 and somatodendritic targeting. Ser685 carries the post-translational modification Phosphoserine. Residue Tyr711 is modified to Phosphotyrosine. A Phosphothreonine modification is found at Thr714. Position 721 is a phosphotyrosine (Tyr721). Ser722 carries the phosphoserine modification.

Interacts with AP1G1. Interacts with NOTCH1. N-glycosylated. In terms of tissue distribution, specifically expressed in brain neurons (at protein level).

Its subcellular location is the cell membrane. Functionally, mediates neuron-glia interaction during astrocytogenesis. May promote differentiation of Bergmann glia during cerebellar development by activating DELTEX-dependent NOTCH1 signaling. This Mus musculus (Mouse) protein is Delta and Notch-like epidermal growth factor-related receptor (Dner).